The primary structure comprises 360 residues: Lipid-A-disaccharide synthase (360 aa).

It belongs to the LpxB family.

The enzyme catalyses a lipid X + a UDP-2-N,3-O-bis[(3R)-3-hydroxyacyl]-alpha-D-glucosamine = a lipid A disaccharide + UDP + H(+). The protein operates within bacterial outer membrane biogenesis; LPS lipid A biosynthesis. Condensation of UDP-2,3-diacylglucosamine and 2,3-diacylglucosamine-1-phosphate to form lipid A disaccharide, a precursor of lipid A, a phosphorylated glycolipid that anchors the lipopolysaccharide to the outer membrane of the cell. In Helicobacter pylori (strain Shi470), this protein is Lipid-A-disaccharide synthase.